The sequence spans 128 residues: Small ribosomal subunit protein bS6 (128 aa).

It belongs to the bacterial ribosomal protein bS6 family.

Functionally, binds together with bS18 to 16S ribosomal RNA. This Acinetobacter baylyi (strain ATCC 33305 / BD413 / ADP1) protein is Small ribosomal subunit protein bS6.